Consider the following 156-residue polypeptide: Probable cyclic pyranopterin monophosphate synthase (156 aa).

109–110 (MD) contributes to the substrate binding site. Residue D124 is part of the active site.

This sequence belongs to the MoaC family. In terms of assembly, homohexamer; trimer of dimers.

The catalysed reaction is (8S)-3',8-cyclo-7,8-dihydroguanosine 5'-triphosphate = cyclic pyranopterin phosphate + diphosphate. The protein operates within cofactor biosynthesis; molybdopterin biosynthesis. Functionally, catalyzes the conversion of (8S)-3',8-cyclo-7,8-dihydroguanosine 5'-triphosphate to cyclic pyranopterin monophosphate (cPMP). This Methanopyrus kandleri (strain AV19 / DSM 6324 / JCM 9639 / NBRC 100938) protein is Probable cyclic pyranopterin monophosphate synthase.